Here is a 324-residue protein sequence, read N- to C-terminus: MIRAYEQNPQHFIEDLEKVRVEQLTGHGSSVLEELVQLVKDKNIDISIKYDPRKDSEVFANRVITDDIELLKKILAYFLPEDAILKGGHYDNQLQNGIKRVKEFLESSPNTQWELRAFMAVMHFSLTADRIDDDILKVIVDSMNHHGDARSKLREELAELTAELKIYSVIQAEINKHLSSSGTINIHDKSINLMDKNLYGYTDEEIFKASAEYKILEKMPQTTIQVDGSEKKIVSIKDFLGSENKRTGALGNLKNSYSYNKDNNELSHFATTCSDKSRPLNDLVSQKTTQLSDITSRFNSAIEALNRFIQKYDSVMQRLLDDTR.

Its subcellular location is the secreted. Its function is as follows. Possibly involved in calcium regulation of YOP expression, which includes the export process. This is Virulence-associated V antigen (lcrV) from Yersinia pestis (strain Pestoides F).